The chain runs to 302 residues: Cell division protein FtsQ (302 aa).

The disordered stretch occupies residues 1–41; sequence MPAVVRGGPPKPRRPRAEAPASPSKGKPAPRKAQPAAKLHA. Topologically, residues 1 to 50 are cytoplasmic; sequence MPAVVRGGPPKPRRPRAEAPASPSKGKPAPRKAQPAAKLHAARGVGLSPT. Residues 18 to 38 are compositionally biased toward low complexity; the sequence is EAPASPSKGKPAPRKAQPAAK. Residues 51–71 traverse the membrane as a helical segment; sequence VALSVAGAALGLGLVVMLATG. At 72 to 302 the chain is on the periplasmic side; it reads HRAERLGASM…LPGQPAADGA (231 aa). Residues 94–162 form the POTRA domain; that stretch reads FRLKTVHIRG…DTVLIAVEER (69 aa).

The protein belongs to the FtsQ/DivIB family. FtsQ subfamily.

It is found in the cell inner membrane. Functionally, essential cell division protein. The protein is Cell division protein FtsQ of Caulobacter vibrioides (strain ATCC 19089 / CIP 103742 / CB 15) (Caulobacter crescentus).